A 369-amino-acid polypeptide reads, in one-letter code: 4-hydroxy-3-methylbut-2-en-1-yl diphosphate synthase (flavodoxin) (369 aa).

Cysteine 270, cysteine 273, cysteine 305, and glutamate 312 together coordinate [4Fe-4S] cluster.

The protein belongs to the IspG family. Requires [4Fe-4S] cluster as cofactor.

It carries out the reaction (2E)-4-hydroxy-3-methylbut-2-enyl diphosphate + oxidized [flavodoxin] + H2O + 2 H(+) = 2-C-methyl-D-erythritol 2,4-cyclic diphosphate + reduced [flavodoxin]. Its pathway is isoprenoid biosynthesis; isopentenyl diphosphate biosynthesis via DXP pathway; isopentenyl diphosphate from 1-deoxy-D-xylulose 5-phosphate: step 5/6. Its function is as follows. Converts 2C-methyl-D-erythritol 2,4-cyclodiphosphate (ME-2,4cPP) into 1-hydroxy-2-methyl-2-(E)-butenyl 4-diphosphate. The sequence is that of 4-hydroxy-3-methylbut-2-en-1-yl diphosphate synthase (flavodoxin) from Pseudomonas fluorescens (strain Pf0-1).